The following is a 200-amino-acid chain: 3-isopropylmalate dehydratase small subunit (200 aa).

It belongs to the LeuD family. LeuD type 1 subfamily. As to quaternary structure, heterodimer of LeuC and LeuD.

The catalysed reaction is (2R,3S)-3-isopropylmalate = (2S)-2-isopropylmalate. The protein operates within amino-acid biosynthesis; L-leucine biosynthesis; L-leucine from 3-methyl-2-oxobutanoate: step 2/4. Its function is as follows. Catalyzes the isomerization between 2-isopropylmalate and 3-isopropylmalate, via the formation of 2-isopropylmaleate. This Haemophilus influenzae (strain 86-028NP) protein is 3-isopropylmalate dehydratase small subunit.